Here is a 186-residue protein sequence, read N- to C-terminus: Peptidyl-tRNA hydrolase (186 aa).

Y14 is a tRNA binding site. H19 acts as the Proton acceptor in catalysis. Positions 64, 66, and 112 each coordinate tRNA.

This sequence belongs to the PTH family. In terms of assembly, monomer.

The protein localises to the cytoplasm. The enzyme catalyses an N-acyl-L-alpha-aminoacyl-tRNA + H2O = an N-acyl-L-amino acid + a tRNA + H(+). In terms of biological role, hydrolyzes ribosome-free peptidyl-tRNAs (with 1 or more amino acids incorporated), which drop off the ribosome during protein synthesis, or as a result of ribosome stalling. Functionally, catalyzes the release of premature peptidyl moieties from peptidyl-tRNA molecules trapped in stalled 50S ribosomal subunits, and thus maintains levels of free tRNAs and 50S ribosomes. This chain is Peptidyl-tRNA hydrolase, found in Bacillus cytotoxicus (strain DSM 22905 / CIP 110041 / 391-98 / NVH 391-98).